The primary structure comprises 674 residues: E3 ubiquitin ligase Rnf157 (674 aa).

The RING-type zinc finger occupies C277 to R316. Disordered regions lie at residues L376 to I404 and Q433 to E610. Residues T469–L508 are compositionally biased toward polar residues. Residues A509–S526 show a composition bias toward low complexity. Over residues T527 to Y537 the composition is skewed to polar residues. Over residues E583–G604 the composition is skewed to acidic residues.

Its subcellular location is the cytoplasm. It carries out the reaction S-ubiquitinyl-[E2 ubiquitin-conjugating enzyme]-L-cysteine + [acceptor protein]-L-lysine = [E2 ubiquitin-conjugating enzyme]-L-cysteine + N(6)-ubiquitinyl-[acceptor protein]-L-lysine.. Functionally, E3 ubiquitin ligase that ubiquitinates apbb1 for its degradation by the proteasome and thus prevents apoptosis and promotes survival of neurons. Has a dual role in neurons as it is also required for dendrite growth and maintenance for which its ligase activity is not critical. May act as a scaffold molecule to regulate this process. Acts as a downstream effector of the interconnected PI3K and MAPK signaling pathways and thus participates in the regulation of the cell cycle. The polypeptide is E3 ubiquitin ligase Rnf157 (rnf157) (Xenopus laevis (African clawed frog)).